Reading from the N-terminus, the 103-residue chain is Large ribosomal subunit protein bL21 (103 aa).

The protein belongs to the bacterial ribosomal protein bL21 family. Part of the 50S ribosomal subunit. Contacts protein L20.

Functionally, this protein binds to 23S rRNA in the presence of protein L20. The chain is Large ribosomal subunit protein bL21 from Escherichia coli O127:H6 (strain E2348/69 / EPEC).